Consider the following 498-residue polypeptide: 3-octaprenyl-4-hydroxybenzoate carboxy-lyase (498 aa).

N175 provides a ligand contact to Mn(2+). Residues 178-180, 192-194, and 197-198 each bind prenylated FMN; these read IYR, RWL, and RG. E241 is a binding site for Mn(2+). D290 (proton donor) is an active-site residue.

Belongs to the UbiD family. As to quaternary structure, homohexamer. It depends on prenylated FMN as a cofactor. The cofactor is Mn(2+).

The protein resides in the cell membrane. The enzyme catalyses a 4-hydroxy-3-(all-trans-polyprenyl)benzoate + H(+) = a 2-(all-trans-polyprenyl)phenol + CO2. Its pathway is cofactor biosynthesis; ubiquinone biosynthesis. In terms of biological role, catalyzes the decarboxylation of 3-octaprenyl-4-hydroxy benzoate to 2-octaprenylphenol, an intermediate step in ubiquinone biosynthesis. This Yersinia pseudotuberculosis serotype I (strain IP32953) protein is 3-octaprenyl-4-hydroxybenzoate carboxy-lyase.